Reading from the N-terminus, the 161-residue chain is Allophycocyanin alpha chain 1 (161 aa).

N4-methylasparagine is present on asparagine 71. Cysteine 81 contacts (2R,3E)-phycocyanobilin.

It belongs to the phycobiliprotein family. As to quaternary structure, component of the phycobilisome. Heterodimer of an alpha and a beta chain. Post-translationally, contains one covalently linked bilin chromophore.

It is found in the cellular thylakoid membrane. Functionally, light-harvesting photosynthetic bile pigment-protein from the phycobiliprotein complex. Allophycocyanin has a maximum absorption at approximately 650 nanometers. The polypeptide is Allophycocyanin alpha chain 1 (Microchaete diplosiphon (Fremyella diplosiphon)).